A 346-amino-acid chain; its full sequence is Heparan sulfate glucosamine 3-O-sulfotransferase 5 (346 aa).

Over 1–12 the chain is Cytoplasmic; it reads MLFKQQAWLRQK. The chain crosses the membrane as a helical; Signal-anchor for type II membrane protein span at residues 13–32; sequence LLVLGSLAVGSLLYLVARVG. The Lumenal segment spans residues 33–346; that stretch reads SLDRLQPICP…QITGRTLNWP (314 aa). A 3'-phosphoadenylyl sulfate-binding site is contributed by 100–104; the sequence is KGGTR. Residues 122 to 128 and 155 to 158 contribute to the substrate site; these read EIHFFDN and KSPA. Arg-183 and Ser-191 together coordinate 3'-phosphoadenylyl sulfate. 226–227 provides a ligand contact to substrate; the sequence is YK. A glycan (N-linked (GlcNAc...) asparagine) is linked at Asn-287. Tyr-293 serves as a coordination point for 3'-phosphoadenylyl sulfate. Cys-294 and Cys-304 form a disulfide bridge. 309–313 is a binding site for 3'-phosphoadenylyl sulfate; the sequence is KGRIH.

The protein belongs to the sulfotransferase 1 family. As to expression, highly expressed in skeletal muscle and fetal brain, and also found in adult brain, spinal cord, cerebellum and colon.

Its subcellular location is the golgi apparatus membrane. It catalyses the reaction alpha-D-glucosaminyl-[heparan sulfate](n) + 3'-phosphoadenylyl sulfate = 3-sulfo-alpha-D-glucosaminyl-[heparan sulfate](n) + adenosine 3',5'-bisphosphate + H(+). In terms of biological role, sulfotransferase that utilizes 3'-phospho-5'-adenylyl sulfate (PAPS) to catalyze the transfer of a sulfo group to position 3 of glucosamine residues in heparan. Catalyzes the rate limiting step in the biosynthesis of heparan sulfate (HSact). This modification is a crucial step in the biosynthesis of anticoagulant heparan sulfate as it completes the structure of the antithrombin pentasaccharide binding site. Also generates GlcUA-GlcNS or IdoUA-GlcNS and IdoUA2S-GlcNH2. The substrate-specific O-sulfation generates an enzyme-modified heparan sulfate which acts as a binding receptor to Herpes simplex virus-1 (HSV-1) and permits its entry. The protein is Heparan sulfate glucosamine 3-O-sulfotransferase 5 (HS3ST5) of Homo sapiens (Human).